Consider the following 341-residue polypeptide: Very-long-chain 3-oxoacyl-CoA reductase (341 aa).

The helical transmembrane segment at 22–42 (AIYGFLLAGVAAFAAPIVSTI) threads the bilayer. Positions 67, 123, 131, 150, 217, 221, 250, and 252 each coordinate NADP(+). The active-site Proton donor is Tyr-217. Lys-221 (lowers pKa of active site Tyr) is an active-site residue.

It belongs to the short-chain dehydrogenases/reductases (SDR) family.

The protein resides in the endoplasmic reticulum membrane. The enzyme catalyses a very-long-chain (3R)-3-hydroxyacyl-CoA + NADP(+) = a very-long-chain 3-oxoacyl-CoA + NADPH + H(+). It participates in lipid metabolism; fatty acid biosynthesis. Component of the microsomal membrane bound fatty acid elongation system, which produces the 26-carbon very long-chain fatty acids (VLCFA) from palmitate. Catalyzes the reduction of the 3-ketoacyl-CoA intermediate that is formed in each cycle of fatty acid elongation. VLCFAs serve as precursors for ceramide and sphingolipids. The protein is Very-long-chain 3-oxoacyl-CoA reductase of Phaeosphaeria nodorum (strain SN15 / ATCC MYA-4574 / FGSC 10173) (Glume blotch fungus).